A 349-amino-acid chain; its full sequence is ATPase GET3 (349 aa).

Position 26–33 (26–33) interacts with ATP; that stretch reads KGGVGKTT. Asp57 is an active-site residue. Positions 242 and 269 each coordinate ATP. Residues Cys281 and Cys284 each contribute to the Zn(2+) site.

Belongs to the arsA ATPase family. As to quaternary structure, homodimer. Component of the Golgi to ER traffic (GET) complex, which is composed of GET1, GET2 and GET3. Within the complex, GET1 and GET2 form a heterotetramer which is stabilized by phosphatidylinositol binding and which binds to the GET3 homodimer. Interacts with the chloride channel protein GEF1.

It localises to the cytoplasm. The protein resides in the endoplasmic reticulum. The protein localises to the golgi apparatus. ATPase required for the post-translational delivery of tail-anchored (TA) proteins to the endoplasmic reticulum. Recognizes and selectively binds the transmembrane domain of TA proteins in the cytosol. This complex then targets to the endoplasmic reticulum by membrane-bound receptors GET1 and GET2, where the tail-anchored protein is released for insertion. This process is regulated by ATP binding and hydrolysis. ATP binding drives the homodimer towards the closed dimer state, facilitating recognition of newly synthesized TA membrane proteins. ATP hydrolysis is required for insertion. Subsequently, the homodimer reverts towards the open dimer state, lowering its affinity for the GET1-GET2 receptor, and returning it to the cytosol to initiate a new round of targeting. Cooperates with the HDEL receptor ERD2 to mediate the ATP-dependent retrieval of resident ER proteins that contain a C-terminal H-D-E-L retention signal from the Golgi to the ER. Involved in low-level resistance to the oxyanions arsenite and arsenate, and in heat tolerance. The chain is ATPase GET3 from Candida tropicalis (strain ATCC MYA-3404 / T1) (Yeast).